The sequence spans 457 residues: Autophagy-related protein 14 (457 aa).

The stretch at 31–109 (RIENVMALIE…TRRAALSRRK (79 aa)) forms a coiled coil. Disordered stretches follow at residues 54–73 (ETNA…QRTA), 252–274 (PSQA…VSRP), and 433–457 (NKNL…VKNR). A compositionally biased stretch (low complexity) spans 253–266 (SQASVSSPSSTTDT).

Belongs to the ATG14 family. Component of the autophagy-specific VPS34 PI3-kinase complex I.

The protein resides in the preautophagosomal structure membrane. It localises to the vacuole membrane. Functionally, required for cytoplasm to vacuole transport (Cvt) and autophagy as a part of the autophagy-specific VPS34 PI3-kinase complex I. This complex is essential to recruit the ATG8-phosphatidylinositol conjugate and the ATG12-ATG5 conjugate to the pre-autophagosomal structure. ATG14 mediates the specific binding of the VPS34 PI3-kinase complex I to the preautophagosomal structure (PAS). Autophagy is required for proper vegetative growth, asexual/sexual reproduction, and full virulence. Autophagy is particularly involved in the biosynthesis of deoxynivalenol (DON), an important virulence determinant. The sequence is that of Autophagy-related protein 14 from Gibberella zeae (strain ATCC MYA-4620 / CBS 123657 / FGSC 9075 / NRRL 31084 / PH-1) (Wheat head blight fungus).